A 275-amino-acid polypeptide reads, in one-letter code: Phosphonoacetaldehyde hydrolase (275 aa).

Aspartate 15 (nucleophile) is an active-site residue. Aspartate 15 and alanine 17 together coordinate Mg(2+). Lysine 56 serves as the catalytic Schiff-base intermediate with substrate. Mg(2+) is bound at residue aspartate 189.

Belongs to the HAD-like hydrolase superfamily. PhnX family. Homodimer. Requires Mg(2+) as cofactor.

It catalyses the reaction phosphonoacetaldehyde + H2O = acetaldehyde + phosphate + H(+). Functionally, involved in phosphonate degradation. The protein is Phosphonoacetaldehyde hydrolase of Pseudomonas putida (Arthrobacter siderocapsulatus).